The sequence spans 500 residues: Chromosomal replication initiator protein DnaA (500 aa).

Residues 1–81 (MVNASGDPVI…LQALRTVTGE (81 aa)) form a domain I, interacts with DnaA modulators region. The segment at 81 to 155 (ENMFPAFKVV…QQKMNRDPET (75 aa)) is domain II. Residues 156-377 (HLNKNFTFDS…GALTRVTAVA (222 aa)) form a domain III, AAA+ region region. ATP contacts are provided by glycine 200, glycine 202, lysine 203, and threonine 204. A domain IV, binds dsDNA region spans residues 378–500 (SLSNQPVTRA…TVRLKQSNTN (123 aa)).

It belongs to the DnaA family. Oligomerizes as a right-handed, spiral filament on DNA at oriC.

It is found in the cytoplasm. Functionally, plays an essential role in the initiation and regulation of chromosomal replication. ATP-DnaA binds to the origin of replication (oriC) to initiate formation of the DNA replication initiation complex once per cell cycle. Binds the DnaA box (a 9 base pair repeat at the origin) and separates the double-stranded (ds)DNA. Forms a right-handed helical filament on oriC DNA; dsDNA binds to the exterior of the filament while single-stranded (ss)DNA is stabiized in the filament's interior. The ATP-DnaA-oriC complex binds and stabilizes one strand of the AT-rich DNA unwinding element (DUE), permitting loading of DNA polymerase. After initiation quickly degrades to an ADP-DnaA complex that is not apt for DNA replication. Binds acidic phospholipids. This is Chromosomal replication initiator protein DnaA from Bifidobacterium longum (strain DJO10A).